The sequence spans 159 residues: Large ribosomal subunit protein uL15 (159 aa).

A compositionally biased stretch (basic and acidic residues) spans 1 to 13 (MRLNELRDNDGAT). The disordered stretch occupies residues 1–41 (MRLNELRDNDGATKIRTRVGRGIGSGKGKTGGRGVKGQKSR). Positions 21–35 (RGIGSGKGKTGGRGV) are enriched in gly residues.

This sequence belongs to the universal ribosomal protein uL15 family. Part of the 50S ribosomal subunit.

Functionally, binds to the 23S rRNA. This chain is Large ribosomal subunit protein uL15, found in Maricaulis maris (strain MCS10) (Caulobacter maris).